Here is a 651-residue protein sequence, read N- to C-terminus: MKRKVKKMAAMATSIIMAIMIILHSIPVLAGRIIYDNETGTHGGYDYELWKDYGNTIMELNDGGTFSCQWSNIGNALFRKGRKFNSDKTYQELGDIVVEYGCDYNPNGNSYLCVYGWTRNPLVEYYIVESWGSWRPPGATPKGTITVDGGTYEIYETTRVNQPSIDGTATFQQYWSVRTSKRTSGTISVTEHFKQWERMGMRMGKMYEVALTVEGYQSSGYANVYKNEIRIGANPTPAPSQSPIRRDAFSIIEAEEYNSTNSSTLQVIGTPNNGRGIGYIENGNTVTYSNIDFGSGATGFSATVATEVNTSIQIRSDSPTGTLLGTLYVSSTGSWNTYQTVSTNISKITGVHDIVLVFSGPVNVDNFIFSRSSPVPAPGDNTRDAYSIIQAEDYDSSYGPNLQIFSLPGGGSAIGYIENGYSTTYNNVNFANGLSSITARVATQISTSIQVRAGGATGTLLGTIYVPSTNSWDSYQNVTANLSNITGVHDITLVFSGPVNVDYFVFTPANVNSGPTSPVGGTRSAFSNIQAEDYDSSYGPNLQIFSLPGGGSAIGYIENGYSTTYKNIDFGDGATSVTARVATQNATTIQVRLGSPSGTLLGTIYVGSTGSFDTYRDVSATISNTAGVKDIVLVFSGPVNVDWFVFSKSGT.

The N-terminal stretch at 1 to 30 is a signal peptide; sequence MKRKVKKMAAMATSIIMAIMIILHSIPVLA. Residues 33 to 227 form the GH11 domain; that stretch reads IIYDNETGTH…SSGYANVYKN (195 aa). Glu124 functions as the Nucleophile in the catalytic mechanism. The active-site Proton donor is the Glu214. 3 consecutive CBM6 domains span residues 250–370, 387–507, and 527–647; these read SIIE…FIFS, SIIQ…FVFT, and SNIQ…FVFS. Residues Glu253 and Glu255 each coordinate Ca(2+). Thr270 contributes to the D-xylotriose binding site. Arg275 lines the Ca(2+) pocket. Copy 1 of the repeat occupies 278-339; it reads GYIENGNTVT…SSTGSWNTYQ (62 aa). The segment at 278-616 is 3 X 61 AA approximate repeats; it reads GYIENGNTVT…GSTGSFDTYR (339 aa). Tyr279, Asn336, and Asn363 together coordinate D-xylotriose. The D-xylobiose site is built by Tyr279, Asn336, and Asn363. Asp365 serves as a coordination point for Ca(2+). Repeat 2 spans residues 415 to 476; sequence GYIENGYSTT…PSTNSWDSYQ (62 aa). Ca(2+) contacts are provided by Gln530, Glu532, and Ser552. Repeat unit 3 spans residues 555–616; the sequence is GYIENGYSTT…GSTGSFDTYR (62 aa). D-xylotriose contacts are provided by Tyr556, Asp613, and Asn640. Asp642 lines the Ca(2+) pocket.

It belongs to the glycosyl hydrolase 11 (cellulase G) family.

It localises to the secreted. It carries out the reaction Endohydrolysis of (1-&gt;4)-beta-D-xylosidic linkages in xylans.. It participates in glycan degradation; xylan degradation. In terms of biological role, endoxylanase that degrades arabinoxylan and glucuronoxylan to xylobiose and xylotriose (in vitro). This chain is Endo-1,4-beta-xylanase A (xynA), found in Thermoclostridium stercorarium (Clostridium stercorarium).